Reading from the N-terminus, the 1037-residue chain is Ephrin type-A receptor 5 (1037 aa).

The first 24 residues, 1-24, serve as a signal peptide directing secretion; it reads MRGSGPRGAGRRRPPSGGGDTPIT. The interval 1–24 is disordered; the sequence is MRGSGPRGAGRRRPPSGGGDTPIT. Residues 25–573 are Extracellular-facing; it reads PASLAGCYSA…AASSDQSQIP (549 aa). Residues 60 to 238 form the Eph LBD domain; the sequence is EVNLLDSRTV…YYKKCPSVVR (179 aa). N-linked (GlcNAc...) asparagine glycans are attached at residues Asn-264, Asn-299, Asn-369, Asn-423, Asn-436, and Asn-461. 2 consecutive Fibronectin type-III domains span residues 357–467 and 468–562; these read PPSA…TNQA and APSP…TTPV. A helical membrane pass occupies residues 574–594; sequence VIAVSVTVGVILLAVVIGVLL. Residues 595–1037 are Cytoplasmic-facing; the sequence is SGSCCECGCG…VQLVNGMVPL (443 aa). Phosphotyrosine; by autocatalysis occurs at positions 650 and 656. The Protein kinase domain maps to 675 to 936; that stretch reads ITIERVIGAG…EIVNMLDKLI (262 aa). ATP is bound by residues 681-689 and Lys-707; that span reads IGAGEFGEV. Catalysis depends on Asp-800, which acts as the Proton acceptor. 2 positions are modified to phosphotyrosine; by autocatalysis: Tyr-833 and Tyr-982. One can recognise an SAM domain in the interval 965–1029; that stretch reads GAYRSVGEWL…MNSLQEMKVQ (65 aa). Positions 1035–1037 match the PDZ-binding motif; that stretch reads VPL.

Belongs to the protein kinase superfamily. Tyr protein kinase family. Ephrin receptor subfamily. As to quaternary structure, heterotetramer upon binding of the ligand. The heterotetramer is composed of an ephrin dimer and a receptor dimer. Oligomerization is probably required to induce biological responses. Interacts (via SAM domain) with SAMD5 (via SAM domain). In terms of processing, phosphorylated. Phosphorylation is stimulated by the ligand EFNA5. Dephosphorylation upon stimulation by glucose, inhibits EPHA5 forward signaling and results in insulin secretion. Almost exclusively expressed in the nervous system in cortical neurons, cerebellar Purkinje cells and pyramidal neurons within the cortex and hippocampus. Display an increasing gradient of expression from the forebrain to hindbrain and spinal cord.

Its subcellular location is the cell membrane. It is found in the cell projection. The protein localises to the axon. It localises to the dendrite. The catalysed reaction is L-tyrosyl-[protein] + ATP = O-phospho-L-tyrosyl-[protein] + ADP + H(+). In terms of biological role, receptor tyrosine kinase which binds promiscuously GPI-anchored ephrin-A family ligands residing on adjacent cells, leading to contact-dependent bidirectional signaling into neighboring cells. The signaling pathway downstream of the receptor is referred to as forward signaling while the signaling pathway downstream of the ephrin ligand is referred to as reverse signaling. Among GPI-anchored ephrin-A ligands, EFNA5 most probably constitutes the cognate/functional ligand for EPHA5. Functions as an axon guidance molecule during development and may be involved in the development of the retinotectal, entorhino-hippocampal and hippocamposeptal pathways. Together with EFNA5 plays also a role in synaptic plasticity in adult brain through regulation of synaptogenesis. In addition to its function in the nervous system, the interaction of EPHA5 with EFNA5 mediates communication between pancreatic islet cells to regulate glucose-stimulated insulin secretion. The protein is Ephrin type-A receptor 5 (EPHA5) of Homo sapiens (Human).